The following is a 444-amino-acid chain: Phosphoribosylamine--glycine ligase (444 aa).

In terms of domain architecture, ATP-grasp spans 109-324; that stretch reads RNLFKKYEID…FLDVCFAIAE (216 aa). ATP is bound at residue 140-202; it reads MTSLGKDVVV…EEKLVGVEFT (63 aa). Mg(2+)-binding residues include glutamine 282, glutamate 294, and asparagine 296. Mn(2+) is bound by residues glutamine 282, glutamate 294, and asparagine 296.

This sequence belongs to the GARS family. The cofactor is Mg(2+). It depends on Mn(2+) as a cofactor.

It catalyses the reaction 5-phospho-beta-D-ribosylamine + glycine + ATP = N(1)-(5-phospho-beta-D-ribosyl)glycinamide + ADP + phosphate + H(+). The protein operates within purine metabolism; IMP biosynthesis via de novo pathway; N(1)-(5-phospho-D-ribosyl)glycinamide from 5-phospho-alpha-D-ribose 1-diphosphate: step 2/2. This is Phosphoribosylamine--glycine ligase from Methanococcus maripaludis (strain C5 / ATCC BAA-1333).